A 236-amino-acid chain; its full sequence is Small ribosomal subunit protein uS2c (236 aa).

This sequence belongs to the universal ribosomal protein uS2 family.

The protein resides in the plastid. Its subcellular location is the chloroplast. This chain is Small ribosomal subunit protein uS2c (rps2), found in Ipomoea purpurea (Common morning glory).